The chain runs to 76 residues: ATP synthase subunit 9, mitochondrial (76 aa).

2 helical membrane passes run 14-34 and 52-72; these read ISTI…AALI and ILGF…SFLL.

The protein belongs to the ATPase C chain family. As to quaternary structure, F-type ATPases have 2 components, CF(1) - the catalytic core - and CF(0) - the membrane proton channel. CF(1) has five subunits: alpha(3), beta(3), gamma(1), delta(1), epsilon(1). CF(0) has three main subunits: a, b and c.

Its subcellular location is the mitochondrion membrane. Mitochondrial membrane ATP synthase (F(1)F(0) ATP synthase or Complex V) produces ATP from ADP in the presence of a proton gradient across the membrane which is generated by electron transport complexes of the respiratory chain. F-type ATPases consist of two structural domains, F(1) - containing the extramembraneous catalytic core and F(0) - containing the membrane proton channel, linked together by a central stalk and a peripheral stalk. During catalysis, ATP synthesis in the catalytic domain of F(1) is coupled via a rotary mechanism of the central stalk subunits to proton translocation. Part of the complex F(0) domain. A homomeric c-ring of probably 10 subunits is part of the complex rotary element. This Vanderwaltozyma polyspora (strain ATCC 22028 / DSM 70294 / BCRC 21397 / CBS 2163 / NBRC 10782 / NRRL Y-8283 / UCD 57-17) (Kluyveromyces polysporus) protein is ATP synthase subunit 9, mitochondrial (ATP9).